The primary structure comprises 164 residues: SsrA-binding protein (164 aa).

It belongs to the SmpB family.

The protein localises to the cytoplasm. Required for rescue of stalled ribosomes mediated by trans-translation. Binds to transfer-messenger RNA (tmRNA), required for stable association of tmRNA with ribosomes. tmRNA and SmpB together mimic tRNA shape, replacing the anticodon stem-loop with SmpB. tmRNA is encoded by the ssrA gene; the 2 termini fold to resemble tRNA(Ala) and it encodes a 'tag peptide', a short internal open reading frame. During trans-translation Ala-aminoacylated tmRNA acts like a tRNA, entering the A-site of stalled ribosomes, displacing the stalled mRNA. The ribosome then switches to translate the ORF on the tmRNA; the nascent peptide is terminated with the 'tag peptide' encoded by the tmRNA and targeted for degradation. The ribosome is freed to recommence translation, which seems to be the essential function of trans-translation. This is SsrA-binding protein from Gluconobacter oxydans (strain 621H) (Gluconobacter suboxydans).